An 835-amino-acid polypeptide reads, in one-letter code: Bifunctional uridylyltransferase/uridylyl-removing enzyme (835 aa).

Positions 1-316 (MTDEAEDSGP…GGKPVAERSP (316 aa)) are uridylyltransferase. The interval 317-650 (LAEGVVEQDG…SADGPEPLGV (334 aa)) is uridylyl-removing. An HD domain is found at 431 to 554 (VDRHLIETAV…DALATGPAAW (124 aa)). Positions 610-645 (QTEPPADSAPAPSSPSSPSFPSPLSSPSSPSSADGP) are disordered. Positions 621 to 630 (PSSPSSPSFP) are enriched in pro residues. The span at 631–642 (SPLSSPSSPSSA) shows a compositional bias: low complexity. 2 consecutive ACT domains span residues 651–736 (ELLI…LAER) and 765–835 (VIEV…SLRT).

This sequence belongs to the GlnD family. Mg(2+) serves as cofactor.

The enzyme catalyses [protein-PII]-L-tyrosine + UTP = [protein-PII]-uridylyl-L-tyrosine + diphosphate. It catalyses the reaction [protein-PII]-uridylyl-L-tyrosine + H2O = [protein-PII]-L-tyrosine + UMP + H(+). Its activity is regulated as follows. Uridylyltransferase (UTase) activity is inhibited by glutamine, while glutamine activates uridylyl-removing (UR) activity. Functionally, modifies, by uridylylation and deuridylylation, the PII regulatory proteins (GlnB and homologs), in response to the nitrogen status of the cell that GlnD senses through the glutamine level. Under low glutamine levels, catalyzes the conversion of the PII proteins and UTP to PII-UMP and PPi, while under higher glutamine levels, GlnD hydrolyzes PII-UMP to PII and UMP (deuridylylation). Thus, controls uridylylation state and activity of the PII proteins, and plays an important role in the regulation of nitrogen assimilation and metabolism. This is Bifunctional uridylyltransferase/uridylyl-removing enzyme from Streptomyces coelicolor (strain ATCC BAA-471 / A3(2) / M145).